The following is a 187-amino-acid chain: MENNNGNNQLPPKGNEQLKSFWSKEMEGNLDFKNHDLPITRIKKIMKYDPDVTMIASEAPILLSKACEMFIMDLTMRSWLHAQESKRVTLQKSNVDAAVAQTVIFDFLLDDDIEVKRESVAAAADPVAMPPIDDGELPPGMVIGTPVCCSLGIHQPQPQMQAWPGAWTSVSGEEEEARGKKGGDDGN.

The disordered stretch occupies residues 163–187; the sequence is WPGAWTSVSGEEEEARGKKGGDDGN. Residues 177–187 are compositionally biased toward basic and acidic residues; the sequence is ARGKKGGDDGN.

This sequence belongs to the NFYC/HAP5 subunit family. Heterotrimeric transcription factor composed of three components, NF-YA, NF-YB and NF-YC. NF-YB and NF-YC must interact and dimerize for NF-YA association and DNA binding. As to expression, expressed in flowers and siliques.

The protein resides in the nucleus. Its function is as follows. Stimulates the transcription of various genes by recognizing and binding to a CCAAT motif in promoters. This chain is Nuclear transcription factor Y subunit C-8 (NFYC8), found in Arabidopsis thaliana (Mouse-ear cress).